The sequence spans 246 residues: Large ribosomal subunit protein uL30 (246 aa).

This sequence belongs to the universal ribosomal protein uL30 family.

Functionally, binds to G-rich structures in 28S rRNA and in mRNAs. Plays a regulatory role in the translation apparatus; inhibits cell-free translation of mRNAs. The sequence is that of Large ribosomal subunit protein uL30 (rpl7) from Dictyostelium discoideum (Social amoeba).